Consider the following 419-residue polypeptide: Serine hydroxymethyltransferase (419 aa).

(6S)-5,6,7,8-tetrahydrofolate-binding positions include L121 and 125–127 (GHL). At K231 the chain carries N6-(pyridoxal phosphate)lysine.

This sequence belongs to the SHMT family. Homodimer. It depends on pyridoxal 5'-phosphate as a cofactor.

Its subcellular location is the cytoplasm. The enzyme catalyses (6R)-5,10-methylene-5,6,7,8-tetrahydrofolate + glycine + H2O = (6S)-5,6,7,8-tetrahydrofolate + L-serine. It functions in the pathway one-carbon metabolism; tetrahydrofolate interconversion. Its pathway is amino-acid biosynthesis; glycine biosynthesis; glycine from L-serine: step 1/1. Catalyzes the reversible interconversion of serine and glycine with tetrahydrofolate (THF) serving as the one-carbon carrier. This reaction serves as the major source of one-carbon groups required for the biosynthesis of purines, thymidylate, methionine, and other important biomolecules. Also exhibits THF-independent aldolase activity toward beta-hydroxyamino acids, producing glycine and aldehydes, via a retro-aldol mechanism. The chain is Serine hydroxymethyltransferase from Phytoplasma mali (strain AT).